A 189-amino-acid chain; its full sequence is Large ribosomal subunit protein eL18 (189 aa).

This sequence belongs to the eukaryotic ribosomal protein eL18 family.

It localises to the cytoplasm. The chain is Large ribosomal subunit protein eL18 (RpL18) from Aedes aegypti (Yellowfever mosquito).